We begin with the raw amino-acid sequence, 199 residues long: Putative acetyltransferase SAR2635 (199 aa).

This sequence belongs to the transferase hexapeptide repeat family.

The chain is Putative acetyltransferase SAR2635 from Staphylococcus aureus (strain MRSA252).